The sequence spans 225 residues: Ribosomal RNA small subunit methyltransferase G (225 aa).

S-adenosyl-L-methionine contacts are provided by residues G62, 113-114 (AE), and K130.

Belongs to the methyltransferase superfamily. RNA methyltransferase RsmG family.

Its subcellular location is the cytoplasm. Specifically methylates the N7 position of a guanine in 16S rRNA. This chain is Ribosomal RNA small subunit methyltransferase G, found in Petrotoga mobilis (strain DSM 10674 / SJ95).